A 580-amino-acid polypeptide reads, in one-letter code: Ran GTPase-activating protein 1 (580 aa).

7 LRR repeats span residues 48-71, 111-134, 141-168, 207-230, 235-258, 292-315, and 320-343; these read YEGL…AIAE, GAQL…GFEA, CFTL…ALTE, IGTL…ALAE, NSLL…AMAE, LHKL…SLAE, and KSDL…QVQE. Residues 356-429 form a disordered region; sequence SLSDDEDEDD…PPKLPVDAST (74 aa). Positions 358-399 are enriched in acidic residues; that stretch reads SDDEDEDDDDDDEDDDDDEDDENDDEEVEEEEEEVEEEEGGD.

It belongs to the RNA1 family. Homodimer. Identified in a complex with RANBP2 and the ubiquitin-conjugating enzyme E2 (UBE2I). In terms of processing, may be sumoylated.

It localises to the cytoplasm. It is found in the nucleus. The protein resides in the nucleoplasm. The protein localises to the nucleus envelope. Its subcellular location is the chromosome. It localises to the centromere. It is found in the kinetochore. The protein resides in the cytoskeleton. The protein localises to the spindle. GTPase activator for RAN, converting it to the GDP-bound state. Converts cytoplasmic GTP-bound RAN to GDP-bound RAN, which is required for RAN-mediated nuclear import and export. This Xenopus laevis (African clawed frog) protein is Ran GTPase-activating protein 1 (rangap1).